Reading from the N-terminus, the 364-residue chain is Geissoschizine synthase (364 aa).

The Enoyl reductase (ER) domain maps to 24-343; the sequence is GILHPIKFSR…DYLSTAMERI (320 aa). Cysteine 51 contributes to the Zn(2+) binding site. Asparagine 52 is an NADP(+) binding site. Zn(2+) is bound by residues histidine 73, glutamate 74, cysteine 104, cysteine 107, cysteine 110, cysteine 118, and cysteine 168. 13 residues coordinate NADP(+): leucine 194, glycine 196, leucine 197, serine 216, threonine 217, serine 218, lysine 221, arginine 261, valine 280, alanine 282, serine 304, threonine 306, and arginine 351.

The protein belongs to the zinc-containing alcohol dehydrogenase family. Class-III subfamily. As to quaternary structure, homodimer. Zn(2+) is required as a cofactor.

The enzyme catalyses (19E)-geissoschizine + NADP(+) = 4,21-dehydrogeissoschizine + NADPH. The catalysed reaction is (19E)-geissoschizine + NADPH + H(+) = (16R,19E)-isositsirikine + NADP(+). It carries out the reaction (19E)-geissoschizine + NADPH + H(+) = (16R,19Z)-isositsirikine + NADP(+). It functions in the pathway alkaloid biosynthesis. Its function is as follows. An alcohol dehydrogenase involved in the biosynthesis of seco-iridoid and derivatives monoterpenoid indole alkaloids natural products. Catalyzes the production of geissoschizine and its conversion to (16R)-E-isositsirikine and (16R)-Z-isositsirikine. In Alstonia scholaris (Dogbane), this protein is Geissoschizine synthase.